The primary structure comprises 774 residues: MEEEPLLAGSINQGSGDYGAHSESCLHYPDEHTPRSRRLSYSVTDDSCNVEEDADADLYVQQAVVFIEDAIKYRSINHRVDSGSLRLYRWYYSNLCQWGLGLTIAVVLALAFIERPSSLTYTSDIRVKPKPWEPPCGMTEGIEIVCLCIFILDVTAKGYLIGWEEFRMNKWLLAYLIVITASVIDWMLSISMLCDENLRVRRLIRPFFLLQNSSLMKKTLKCIKRTLPEIASVILLLALHICLFTMIGMLIFAKSDDPKQNGEWQTYFRNLPKALSSLLVLLTTANNPDVMIPAYSLNRGYSIFFILFSVFGTYLLMNLMTAIIYNQFRGYLLMSVQTSIIRRRLGIRAAFEVLCCPGRGHTSTQAEGHVERVAVSMFLKVMERVHMKSYCRQAIVKAARRFPDGFISGEDFQRLFNELDKDFVKEHPPKPEYSSSGLQHIQYVYSHYYISVLGNAVALANVICICTVLVLNAEKSASEKNYFYMEIINCIFILYYLIEMLLKIVAFGWKGYLSYRNNIFDGFLTVLLLAIQIVIFITFKIPYVDVDPVPRHVMALWEMIRLVNMLIVFRFLRIIPEIKLMAVVASTIVDLVKNLRAFAGILLVVYYMFAVLGIWLFQGAISPPSNMSLVSNSSLENITGPYSMECGTFEQLEYWPNNFDDFASSLILLYNIMVVNNWHVFTDAYARYTTDWSLVYFVVWWLTSSVMWVNLFVALILENFTYKWDRSNGLSVEDVERIAYQSTVQLMFKEHVKEPTEEELLAQLHQHPHLHLSW.

At 1–92 (MEEEPLLAGS…GSLRLYRWYY (92 aa)) the chain is on the cytoplasmic side. Residues 93 to 113 (SNLCQWGLGLTIAVVLALAFI) form a helical membrane-spanning segment. Topologically, residues 114 to 140 (ERPSSLTYTSDIRVKPKPWEPPCGMTE) are extracellular. Residues 141-161 (GIEIVCLCIFILDVTAKGYLI) form a helical membrane-spanning segment. The Cytoplasmic segment spans residues 162–170 (GWEEFRMNK). The chain crosses the membrane as a helical span at residues 171-191 (WLLAYLIVITASVIDWMLSIS). The Extracellular segment spans residues 192–197 (MLCDEN). The helical transmembrane segment at 198–218 (LRVRRLIRPFFLLQNSSLMKK) threads the bilayer. The interval 217–221 (KKTLK) is interaction with phosphatidylinositol 3,5-bisphosphate. Residues 219–232 (TLKCIKRTLPEIAS) are Cytoplasmic-facing. The chain crosses the membrane as a helical span at residues 233–253 (VILLLALHICLFTMIGMLIFA). The Extracellular portion of the chain corresponds to 254 to 267 (KSDDPKQNGEWQTY). The helical; Pore-forming intramembrane region spans 268–292 (FRNLPKALSSLLVLLTTANNPDVMI). The Extracellular portion of the chain corresponds to 293-302 (PAYSLNRGYS). A helical transmembrane segment spans residues 303–323 (IFFILFSVFGTYLLMNLMTAI). The Cytoplasmic portion of the chain corresponds to 324-452 (IYNQFRGYLL…YVYSHYYISV (129 aa)). A helical membrane pass occupies residues 453–475 (LGNAVALANVICICTVLVLNAEK). At 476 to 486 (SASEKNYFYME) the chain is on the extracellular side. A helical transmembrane segment spans residues 487–507 (IINCIFILYYLIEMLLKIVAF). Residues 508-518 (GWKGYLSYRNN) lie on the Cytoplasmic side of the membrane. Residues 519–539 (IFDGFLTVLLLAIQIVIFITF) form a helical membrane-spanning segment. At 540–564 (KIPYVDVDPVPRHVMALWEMIRLVN) the chain is on the extracellular side. Residues 565–585 (MLIVFRFLRIIPEIKLMAVVA) form a helical membrane-spanning segment. The Cytoplasmic segment spans residues 586-596 (STIVDLVKNLR). Residues 597-617 (AFAGILLVVYYMFAVLGIWLF) traverse the membrane as a helical segment. Residues 618 to 658 (QGAISPPSNMSLVSNSSLENITGPYSMECGTFEQLEYWPNN) are Extracellular-facing. N626, N632, and N637 each carry an N-linked (GlcNAc...) asparagine glycan. Positions 659–681 (FDDFASSLILLYNIMVVNNWHVF) form an intramembrane region, helical; Pore-forming. Residues 682 to 696 (TDAYARYTTDWSLVY) are Extracellular-facing. A helical membrane pass occupies residues 697–717 (FVVWWLTSSVMWVNLFVALIL). The Cytoplasmic segment spans residues 718–774 (ENFTYKWDRSNGLSVEDVERIAYQSTVQLMFKEHVKEPTEEELLAQLHQHPHLHLSW).

This sequence belongs to the calcium channel alpha-1 subunit (TC 1.A.1.11) family. Two pore calcium channel subfamily. As to quaternary structure, homodimer. N-glycosylated.

It is found in the late endosome membrane. The protein resides in the lysosome membrane. The enzyme catalyses Na(+)(in) = Na(+)(out). The catalysed reaction is Ca(2+)(in) = Ca(2+)(out). Functionally, intracellular channel initially characterized as a non-selective Ca(2+)-permeable channel activated by NAADP (nicotinic acid adenine dinucleotide phosphate), it is also a highly-selective Na(+) channel activated directly by PI(3,5)P2 (phosphatidylinositol 3,5-bisphosphate). Localizes to the lysosomal and late endosome membranes where it regulates organellar membrane excitability, membrane trafficking, and pH homeostasis. The chain is Two pore channel protein 2 (tpcn2) from Danio rerio (Zebrafish).